Consider the following 530-residue polypeptide: MRTTFATVALAFLSTVGALPYAPNHRHHRRDDDGVLTVYETILETVYVTAVPGANSSSSYTSYSTGLASVTESSDDGASTALPTTSTESVVVTTSAPAASSSATSYPATFVSTPLYTMDNVTAPVWSNTSVPVSTPETSATSSSEFFTSYPATSSESSSSYPASSTEVASSYSASSTEVTSSYPASSEVATSTSSYVAPVSSSVASSSEISAGSATSYVPTSSSSIALSSVVASASVSAANKGVSTPAVSSAAASSSAVVSSVVSSATSVAASSTISSATSSSASASPTSSSVSGKRGLAWIPGTDLGYSDNFVNKGINWYYNWGSYSSGLSSSFEYVLNQHDANSLSSASSVFTGGATVIGFNEPDLSAAGNPIDAATAASYYLQYLTPLRESGAIGYLGSPAISNVGEDWLSEFMSACSDCKIDFIACHWYGIDFSNLQDYINSLANYGLPIWLTEFACTNWDDSNLPSLDEVKTLMTSALGFLDGHGSVERYSWFAPATELGAGVGNNNALISSSGGLSEVGEIYIS.

Positions 1–18 (MRTTFATVALAFLSTVGA) are cleaved as a signal peptide. Residue N55 is glycosylated (N-linked (GlcNAc...) asparagine). A disordered region spans residues 69–90 (SVTESSDDGASTALPTTSTESV). N120 and N128 each carry an N-linked (GlcNAc...) asparagine glycan.

Its subcellular location is the endoplasmic reticulum. The protein localises to the golgi apparatus. It is found in the secreted. The protein resides in the cell wall. This Schizosaccharomyces pombe (strain 972 / ATCC 24843) (Fission yeast) protein is Alkali-sensitive linkage protein 1 (asl1).